A 119-amino-acid chain; its full sequence is Large ribosomal subunit protein bL20 (119 aa).

The protein belongs to the bacterial ribosomal protein bL20 family.

Functionally, binds directly to 23S ribosomal RNA and is necessary for the in vitro assembly process of the 50S ribosomal subunit. It is not involved in the protein synthesizing functions of that subunit. The polypeptide is Large ribosomal subunit protein bL20 (Alkaliphilus metalliredigens (strain QYMF)).